Consider the following 956-residue polypeptide: GAS2-like protein 2B (956 aa).

Residues Y23–S150 form the Calponin-homology (CH) domain. Residues C191 to H263 enclose the GAR domain. Polar residues-rich tracts occupy residues S332–P353 and D381–S390. 4 disordered regions span residues S332–I361, D378–L406, R853–N885, and V914–V956. Over residues R859–P868 the composition is skewed to basic and acidic residues.

This sequence belongs to the GAS2 family.

The protein localises to the cytoplasm. It localises to the cytoskeleton. The protein resides in the cilium basal body. Functionally, together with gas2l2.L, regulates ciliary orientation and performance. The chain is GAS2-like protein 2B from Xenopus laevis (African clawed frog).